The primary structure comprises 513 residues: Keratin, type II cuticular Hb2 (513 aa).

Residues 1 to 120 (MSYHSFQPGS…PTVQRVKRDE (120 aa)) form a head region. The IF rod domain occupies 120–431 (EKEQIKCLNN…RLLEGEEHRL (312 aa)). The interval 121–155 (KEQIKCLNNRFASFINKVRFLEQKNKLLETKWNFM) is coil 1A. The segment at 156–165 (QQQRCCQTNI) is linker 1. A coil 1B region spans residues 166-266 (EPIFEGYISA…YEEEICLLQS (101 aa)). Positions 267–283 (QISETSVIVKMDNSREL) are linker 12. Residues 284-427 (DVDGIIAEIK…ATYRRLLEGE (144 aa)) form a coil 2 region. Positions 428–513 (EHRLCEGIGP…AGGSSPSHKH (86 aa)) are tail.

This sequence belongs to the intermediate filament family. Heterotetramer of two type I and two type II keratins.

This is Keratin, type II cuticular Hb2 (KRT82) from Homo sapiens (Human).